The following is a 555-amino-acid chain: MSHGPSPRLAESPQLSKGSLLTILGSPSPERMGPADSLPPTPPSGTPSPGPPPALPLPPTPALLADGDWESREELRLRELEEARARAAQMEKTMRWWSDCTANWREKWSKVRAERNRAREEVRQLRQRLDALTKELAGARRERQEAQGESEARGRELARLRGARGGVDRTPDGPETEPEREQEPVPVRDVGSGCERPQGSQELELMESLLKNRPEEPEGCWEVRSAGAGAPRGSSGRQERGRLPWEDTTVEEDASKLTALRLRLDESQKVLLKEREDKMALSRNIEKLEGELSQWKIKYEELSKTKQEMLKQLSILKEAHQDELGRMSEDLEDELGARSSMDRKMAELRGEMERLQAENAAEWGRRERLETEKLGLERENKKLRAQVGDLEEALARRRRQTASALDCDLRASQAALFEKNKELADLKHVHGKLKKQFQEKVAELAHANRRVEQHEAEVKKLRLRVEELKKELAQAEDELDEAHNQARKLQRSLDEQTEQSENLQVQLEHVQSRLRRQQQNAPLFGKIRSARFGAEEAGDGASDLDEDEDLQIQVA.

3 disordered regions span residues 1–68 (MSHG…ADGD), 136–202 (LAGA…GSQE), and 214–254 (PEEP…EEDA). 3 positions are modified to phosphoserine: S12, S26, and S28. Residues 37–61 (SLPPTPPSGTPSPGPPPALPLPPTP) show a composition bias toward pro residues. Residues 72-161 (REELRLRELE…ARGRELARLR (90 aa)) adopt a coiled-coil conformation. Basic and acidic residues-rich tracts occupy residues 136–159 (LAGA…ELAR) and 166–183 (GVDR…REQE). Positions 224 to 236 (RSAGAGAPRGSSG) are enriched in low complexity. Coiled coils occupy residues 268-401 (QKVL…RRQT) and 432-522 (KLKK…QNAP). Residues 478–555 (ELDEAHNQAR…EDEDLQIQVA (78 aa)) are disordered. Residues 536 to 555 (EAGDGASDLDEDEDLQIQVA) are compositionally biased toward acidic residues. S542 is subject to Phosphoserine.

In Bos taurus (Bovine), this protein is Coiled-coil domain-containing protein 102A (CCDC102A).